The primary structure comprises 588 residues: Synaptotagmin-3 (588 aa).

The Vesicular portion of the chain corresponds to 1–54 (MSGDYEDDLCRRALILVSDLCARIRDADTNDRCQEFNELRIRGYPRGPDADISV). The interval 10–34 (CRRALILVSDLCARIRDADTNDRCQ) is cysteine motif. The chain crosses the membrane as a helical span at residues 55 to 75 (SLLSVIVTFCGIVLLGVSLFV). Residues 76–588 (SWKLCWVPWR…KGLSEKENSE (513 aa)) lie on the Cytoplasmic side of the membrane. Disordered stretches follow at residues 129 to 161 (GGPH…PEPS), 183 to 222 (PSQT…VTSL), and 238 to 257 (QTLT…ALPL). The segment covering 183–205 (PSQTSPELPSEGGTGSGLLLLPP) has biased composition (low complexity). Residues 213 to 222 (AQSHQQVTSL) are compositionally biased toward polar residues. Arginine 286 bears the Omega-N-methylarginine mark. C2 domains are found at residues 297 to 418 (PCGR…PLWR) and 429 to 563 (DLGE…EHWH). The Ca(2+) site is built by aspartate 328, aspartate 334, aspartate 386, phenylalanine 387, aspartate 388, serine 391, aspartate 394, aspartate 460, aspartate 466, aspartate 520, and aspartate 522.

The protein belongs to the synaptotagmin family. Homodimer; disulfide-linked via the cysteine motif. Can also form heterodimers with SYT6, SYT9 and SYT10. It depends on Ca(2+) as a cofactor. Brain, various endocrine tissues and hormone-secreting clonal cells.

Its subcellular location is the cell membrane. It localises to the cytoplasmic vesicle. The protein resides in the secretory vesicle membrane. Its function is as follows. Ca(2+) sensor involved in Ca(2+)-dependent exocytosis of secretory vesicles through Ca(2+) and phospholipid binding to the C2 domain. Ca(2+) induces binding of the C2-domains to phospholipid membranes and to assembled SNARE-complexes; both actions contribute to triggering exocytosis. Plays a role in dendrite formation by melanocytes. This is Synaptotagmin-3 (Syt3) from Rattus norvegicus (Rat).